The sequence spans 428 residues: Cysteine synthase 2 (428 aa).

Residues 7–27 (IYIGSAFVAGVVLTIAFKDLF) form a helical membrane-spanning segment. An N6-(pyridoxal phosphate)lysine modification is found at Lys106. Residues 260–264 (GTGGT) and Ser367 each bind pyridoxal 5'-phosphate.

It belongs to the cysteine synthase/cystathionine beta-synthase family. Pyridoxal 5'-phosphate serves as cofactor.

The protein resides in the mitochondrion outer membrane. The enzyme catalyses O-acetyl-L-serine + hydrogen sulfide = L-cysteine + acetate. Functionally, putative cysteine synthase that catalyzes the conversion of O-acetyl-L-serine (OAS) into cysteine, the last step in the cysteine biosynthesis pathway. However, in contrast to cysteine synthase cysB, this CS-like protein seems not to function in cysteine biosynthesis. This is Cysteine synthase 2 from Emericella nidulans (strain FGSC A4 / ATCC 38163 / CBS 112.46 / NRRL 194 / M139) (Aspergillus nidulans).